The sequence spans 204 residues: Twist-related protein 1 (204 aa).

A compositionally biased stretch (low complexity) spans 1-18 (MMQDVSSSPVSPADDSLS). The tract at residues 1 to 107 (MMQDVSSSPV…GGGSPQSYEE (107 aa)) is disordered. Residues 34–43 (RGGRKRRSSR) show a composition bias toward basic residues. 2 stretches are compositionally biased toward gly residues: residues 46 to 65 (AGGG…GGDE) and 80 to 101 (GCGG…GGGS). In terms of domain architecture, bHLH spans 110-161 (TQRVMANVRERQRTQSLNEAFAALRKIIPTLPSDKLSKIQTLKLAARYIDFL). Positions 163–193 (QVLQSDELDSKMASCSYVAHERFSYAFSVWR) are sufficient for transactivation activity.

Efficient DNA binding requires dimerization with another bHLH protein. Homodimer or heterodimer with E proteins such as TCF3. ID1 binds preferentially to TCF3 but does not interact efficiently with TWIST1 so ID1 levels control the amount of TCF3 available to dimerize with TWIST and thus determine the type of dimer formed.

The protein localises to the nucleus. In terms of biological role, acts as a transcriptional regulator. Inhibits myogenesis by sequestrating E proteins, inhibiting trans-activation by MEF2, and inhibiting DNA-binding by MYOD1 through physical interaction. This interaction probably involves the basic domains of both proteins. Also represses expression of pro-inflammatory cytokines such as TNFA and IL1B. Regulates cranial suture patterning and fusion. Activates transcription as a heterodimer with E proteins. Regulates gene expression differentially, depending on dimer composition. Homodimers induce expression of FGFR2 and POSTN while heterodimers repress FGFR2 and POSTN expression and induce THBS1 expression. Heterodimerization is also required for osteoblast differentiation. Represses the activity of the circadian transcriptional activator: NPAS2-BMAL1 heterodimer. This Nomascus concolor (Black crested gibbon) protein is Twist-related protein 1 (TWIST1).